The sequence spans 215 residues: MRTGIIAQKIGMTSVFNDKGERIALTLVKVDDCQVVGHKTLEKHGYNALVIGVKDKKISRVTKPMKQVFANAKISPKTKLKEFRISEENFIDVAASLEVDHFMAGQFVDITAITIGKGFAGSMKRHNFRGLEASHGVSISHRSHGSTGQRQDPGKVFKGKKMAGHMGCNQVTIQNLKIFAVDKDRKLIMIQGSIPGHKNSYLSIKDAIKKISITI.

The segment at 136-155 is disordered; sequence GVSISHRSHGSTGQRQDPGK. The residue at position 151 (Gln151) is an N5-methylglutamine.

The protein belongs to the universal ribosomal protein uL3 family. As to quaternary structure, part of the 50S ribosomal subunit. Forms a cluster with proteins L14 and L19. Post-translationally, methylated by PrmB.

One of the primary rRNA binding proteins, it binds directly near the 3'-end of the 23S rRNA, where it nucleates assembly of the 50S subunit. The chain is Large ribosomal subunit protein uL3 from Rickettsia canadensis (strain McKiel).